The sequence spans 368 residues: Queuine tRNA-ribosyltransferase (368 aa).

Residue D89 is the Proton acceptor of the active site. Substrate-binding positions include 89–93, D143, Q187, and G214; that span reads DSGGF. The active-site Nucleophile is the D264. The RNA binding; important for wobble base 34 recognition stretch occupies residues 269–273; that stretch reads TRNAR. Zn(2+) is bound by residues C302, C304, C307, and H333.

The protein belongs to the queuine tRNA-ribosyltransferase family. In terms of assembly, homodimer. Within each dimer, one monomer is responsible for RNA recognition and catalysis, while the other monomer binds to the replacement base PreQ1. Zn(2+) serves as cofactor.

It catalyses the reaction 7-aminomethyl-7-carbaguanine + guanosine(34) in tRNA = 7-aminomethyl-7-carbaguanosine(34) in tRNA + guanine. Its pathway is tRNA modification; tRNA-queuosine biosynthesis. Functionally, catalyzes the base-exchange of a guanine (G) residue with the queuine precursor 7-aminomethyl-7-deazaguanine (PreQ1) at position 34 (anticodon wobble position) in tRNAs with GU(N) anticodons (tRNA-Asp, -Asn, -His and -Tyr). Catalysis occurs through a double-displacement mechanism. The nucleophile active site attacks the C1' of nucleotide 34 to detach the guanine base from the RNA, forming a covalent enzyme-RNA intermediate. The proton acceptor active site deprotonates the incoming PreQ1, allowing a nucleophilic attack on the C1' of the ribose to form the product. After dissociation, two additional enzymatic reactions on the tRNA convert PreQ1 to queuine (Q), resulting in the hypermodified nucleoside queuosine (7-(((4,5-cis-dihydroxy-2-cyclopenten-1-yl)amino)methyl)-7-deazaguanosine). In Blochmanniella pennsylvanica (strain BPEN), this protein is Queuine tRNA-ribosyltransferase.